The following is a 555-amino-acid chain: MIWVAVVITMLLFILVAKPTGIYLEKAFQGSKKLDKVFGPFEKLIFKITGVKEYNQTWKQYALSLVLLNGFMIVVVYFIFRLQGVLPLNPAHIEGMEPTLAFNTAISFMADTNLQHYSGENGLSYLSQLIGITFLMFAAPATTLALVMAFIRGLAGKELGNFFIDFTRALTRVFLPIAFMAALVFVALGVPQTLDGAVTAQTIDGAKQSILRGPVASFVAIKELGNNGGGFFGANSTHPFENPGQMSNILQMMLMMLLPTALPFTYGRMVGNKKQGRILFVSLFMVFLLGFITITTSELNGNPALNAMGIEHVQGSTEGKEVRFGTVFSSLYATVTTAAETGAVNTMHDTLTPIGGLVPLVNMMLNTVYGGVGAGFVNIIMYAIIAVFISGLMVGRTPEFLGKKIEGKEMKLIAVTILFHPLLILGFSALALSTSLGTDAISHSGFHGLTQVVYEYTSSAANNGSGFEGLGDNTPFWNITTGLVMFLGRYFSLITMLAVAASLKEKTVVPETVGTFRTDNGLFGGIFIGTIVIVGALTFFPMLVLGPIAEFLTLK.

Transmembrane regions (helical) follow at residues 2-22 (IWVAVVITMLLFILVAKPTGI), 60-80 (QYALSLVLLNGFMIVVVYFIF), 130-150 (IGITFLMFAAPATTLALVMAF), 173-193 (VFLPIAFMAALVFVALGVPQT), 246-266 (MSNILQMMLMMLLPTALPFTY), 278-298 (ILFVSLFMVFLLGFITITTSE), 374-394 (AGFVNIIMYAIIAVFISGLMV), 412-432 (LIAVTILFHPLLILGFSALAL), 483-503 (LVMFLGRYFSLITMLAVAASL), and 525-545 (GIFIGTIVIVGALTFFPMLVL).

It belongs to the KdpA family. In terms of assembly, the system is composed of three essential subunits: KdpA, KdpB and KdpC.

The protein localises to the cell membrane. Functionally, part of the high-affinity ATP-driven potassium transport (or Kdp) system, which catalyzes the hydrolysis of ATP coupled with the electrogenic transport of potassium into the cytoplasm. This subunit binds the extracellular potassium ions and delivers the ions to the membrane domain of KdpB through an intramembrane tunnel. The polypeptide is Potassium-transporting ATPase potassium-binding subunit (Bacillus anthracis (strain A0248)).